Consider the following 499-residue polypeptide: UPF0159 protein Ta1429 (499 aa).

2 consecutive ThyX domains span residues 1-246 (MIDR…ALSQ) and 271-476 (EKVR…IKFV).

It belongs to the UPF0159 family.

In Thermoplasma acidophilum (strain ATCC 25905 / DSM 1728 / JCM 9062 / NBRC 15155 / AMRC-C165), this protein is UPF0159 protein Ta1429.